The primary structure comprises 320 residues: 1,5-anhydro-D-fructose reductase (320 aa).

Residue Tyr40 is the Proton donor of the active site. His102 contributes to the substrate binding site. NADP(+) is bound by residues Gln194 and 265–277; that span reads IPGSITPSHIKEN.

The protein belongs to the aldo/keto reductase family. In terms of assembly, monomer.

It localises to the cytoplasm. The catalysed reaction is 1,5-anhydro-D-glucitol + NADP(+) = 1,5-anhydro-D-fructose + NADPH + H(+). With respect to regulation, inhibited by p-chloromercuribenzoic acid and alkyliodines. Functionally, catalyzes the NADPH-dependent reduction of 1,5-anhydro-D-fructose (AF) to 1,5-anhydro-D-glucitol. In Macaca fascicularis (Crab-eating macaque), this protein is 1,5-anhydro-D-fructose reductase (AKR1E2).